Consider the following 481-residue polypeptide: ATP synthase subunit beta (481 aa).

An ATP-binding site is contributed by 167–174 (GGAGVGKT).

It belongs to the ATPase alpha/beta chains family. In terms of assembly, F-type ATPases have 2 components, CF(1) - the catalytic core - and CF(0) - the membrane proton channel. CF(1) has five subunits: alpha(3), beta(3), gamma(1), delta(1), epsilon(1). CF(0) has three main subunits: a(1), b(2) and c(9-12). The alpha and beta chains form an alternating ring which encloses part of the gamma chain. CF(1) is attached to CF(0) by a central stalk formed by the gamma and epsilon chains, while a peripheral stalk is formed by the delta and b chains.

It is found in the cell membrane. The catalysed reaction is ATP + H2O + 4 H(+)(in) = ADP + phosphate + 5 H(+)(out). In terms of biological role, produces ATP from ADP in the presence of a proton gradient across the membrane. The catalytic sites are hosted primarily by the beta subunits. The protein is ATP synthase subunit beta of Corynebacterium efficiens (strain DSM 44549 / YS-314 / AJ 12310 / JCM 11189 / NBRC 100395).